A 99-amino-acid chain; its full sequence is N(2)-fixation sustaining protein CowN (99 aa).

Belongs to the CowN family.

Functionally, is required to sustain N(2)-dependent growth in the presence of low levels of carbon monoxide (CO). Probably acts by protecting the N(2) fixation ability of the nitrogenase complex, which is inactivated in the presence of CO. The polypeptide is N(2)-fixation sustaining protein CowN (Magnetococcus marinus (strain ATCC BAA-1437 / JCM 17883 / MC-1)).